The primary structure comprises 511 residues: ATP synthase subunit alpha 1 (511 aa).

Residue 174–181 (GDRQTGKT) participates in ATP binding.

Belongs to the ATPase alpha/beta chains family. In terms of assembly, F-type ATPases have 2 components, CF(1) - the catalytic core - and CF(0) - the membrane proton channel. CF(1) has five subunits: alpha(3), beta(3), gamma(1), delta(1), epsilon(1). CF(0) has four main subunits: a(1), b(1), b'(1) and c(9-12).

It localises to the cell inner membrane. It catalyses the reaction ATP + H2O + 4 H(+)(in) = ADP + phosphate + 5 H(+)(out). Produces ATP from ADP in the presence of a proton gradient across the membrane. The alpha chain is a regulatory subunit. The chain is ATP synthase subunit alpha 1 from Chlorobium luteolum (strain DSM 273 / BCRC 81028 / 2530) (Pelodictyon luteolum).